We begin with the raw amino-acid sequence, 284 residues long: 4-diphosphocytidyl-2-C-methyl-D-erythritol kinase (284 aa).

Residue Lys22 is part of the active site. Position 104–114 (104–114 (PVGAGLGGASS)) interacts with ATP. Asp146 is an active-site residue.

Belongs to the GHMP kinase family. IspE subfamily.

It carries out the reaction 4-CDP-2-C-methyl-D-erythritol + ATP = 4-CDP-2-C-methyl-D-erythritol 2-phosphate + ADP + H(+). Its pathway is isoprenoid biosynthesis; isopentenyl diphosphate biosynthesis via DXP pathway; isopentenyl diphosphate from 1-deoxy-D-xylulose 5-phosphate: step 3/6. In terms of biological role, catalyzes the phosphorylation of the position 2 hydroxy group of 4-diphosphocytidyl-2C-methyl-D-erythritol. The protein is 4-diphosphocytidyl-2-C-methyl-D-erythritol kinase of Hydrogenobaculum sp. (strain Y04AAS1).